We begin with the raw amino-acid sequence, 98 residues long: Small ribosomal subunit protein uS19 (98 aa).

The disordered stretch occupies residues 77–98 (TRTFRGHAGGKAEKGGSAPRKK).

Belongs to the universal ribosomal protein uS19 family.

Protein S19 forms a complex with S13 that binds strongly to the 16S ribosomal RNA. The polypeptide is Small ribosomal subunit protein uS19 (Chlorobium limicola (strain DSM 245 / NBRC 103803 / 6330)).